Consider the following 151-residue polypeptide: Ribosome maturation factor RimP (151 aa).

It belongs to the RimP family.

It localises to the cytoplasm. Required for maturation of 30S ribosomal subunits. The chain is Ribosome maturation factor RimP from Haemophilus influenzae (strain 86-028NP).